We begin with the raw amino-acid sequence, 375 residues long: N-acetylneuraminate epimerase (375 aa).

A signal peptide spans Met-1–Ala-22. 7 Kelch repeats span residues Thr-43 to Asp-87, Lys-89 to Gly-140, Lys-142 to Ala-176, Ala-177 to Gly-222, Leu-225 to Ala-273, Lys-295 to Asn-344, and Val-346 to Glu-375. Catalysis depends on Glu-231, which acts as the Proton acceptor.

Belongs to the NanM family. In terms of assembly, homodimer.

The protein localises to the periplasm. It carries out the reaction N-acetyl-alpha-neuraminate = N-acetyl-beta-neuraminate. Its function is as follows. Converts alpha-N-acetylneuranimic acid (Neu5Ac) to the beta-anomer, accelerating the equilibrium between the alpha- and beta-anomers. Probably facilitates sialidase-negative bacteria to compete successfully for limited amounts of extracellular Neu5Ac, which is likely taken up in the beta-anomer. In addition, the rapid removal of sialic acid from solution might be advantageous to the bacterium to damp down host responses. This chain is N-acetylneuraminate epimerase, found in Haemophilus influenzae (strain PittEE).